The following is a 768-amino-acid chain: DNA replication licensing factor MCM3 homolog 2 (768 aa).

One can recognise an MCM domain in the interval Thr-290–Ala-497. Gly-340 to Ser-347 serves as a coordination point for ATP. The Arginine finger motif lies at Ser-472 to Asp-475. Residues Glu-661–Ala-670 show a composition bias toward basic and acidic residues. Positions Glu-661–Asp-689 are disordered. Residues Ala-672–Ser-682 are compositionally biased toward gly residues.

The protein belongs to the MCM family.

It is found in the nucleus. It catalyses the reaction ATP + H2O = ADP + phosphate + H(+). In terms of biological role, acts as a factor that allows the DNA to undergo a single round of replication per cell cycle. Required for DNA replication and cell proliferation. May act as a component of the MCM complex which is the putative replicative helicase of the replication licensing system in eukaryotic cells. The sequence is that of DNA replication licensing factor MCM3 homolog 2 (ROA2) from Zea mays (Maize).